The primary structure comprises 400 residues: Argininosuccinate synthase (400 aa).

Residues 10 to 18 (AYSGGVDTS) and Ala-38 contribute to the ATP site. Tyr-89 contributes to the L-citrulline binding site. Gly-119 lines the ATP pocket. Positions 121, 125, and 126 each coordinate L-aspartate. Asn-125 contacts L-citrulline. The L-citrulline site is built by Arg-129, Ser-177, Ser-186, Glu-262, and Tyr-274.

It belongs to the argininosuccinate synthase family. Type 1 subfamily. Homotetramer.

The protein localises to the cytoplasm. It catalyses the reaction L-citrulline + L-aspartate + ATP = 2-(N(omega)-L-arginino)succinate + AMP + diphosphate + H(+). Its pathway is amino-acid biosynthesis; L-arginine biosynthesis; L-arginine from L-ornithine and carbamoyl phosphate: step 2/3. Its activity is regulated as follows. Activity decreases to 53.9% and 18.4% in the presence of 1 mM and 5 mM arginine, respectively. Activity also decreases to 80.1%, 78.1% and 92.1% in the presence of 5 mM ornithine, lysine and succinate, respectively. Activity does not decrease in the presence of glutamate, glutamine or asparagine. Catalyzes the condensation of citrulline and aspartate into argininosuccinate, the immediate precursor of arginine. SyArgG is the rate-limiting step in arginine biosynthesis in Synechocystis PCC 6803. The protein is Argininosuccinate synthase of Synechocystis sp. (strain ATCC 27184 / PCC 6803 / Kazusa).